The chain runs to 809 residues: Sucrose synthase 4 (809 aa).

Residues 275 to 753 (MIFNVVVVSP…GLQRIYEKYT (479 aa)) are GT-B glycosyltransferase.

This sequence belongs to the glycosyltransferase 1 family. Plant sucrose synthase subfamily. Predominantly expressed in the leaf tissues and in caryopses.

The catalysed reaction is an NDP-alpha-D-glucose + D-fructose = a ribonucleoside 5'-diphosphate + sucrose + H(+). Its function is as follows. Sucrose-cleaving enzyme that provides UDP-glucose and fructose for various metabolic pathways. This Oryza sativa subsp. japonica (Rice) protein is Sucrose synthase 4 (SUS4).